The following is a 397-amino-acid chain: MTAAIYLVKGREKSVKRKHPWIFSRGISKVEGEPALGETVDVFTHDGKWLAKAAYSPASQIRARIWSFEKEEINKAFFVKRFNNAQLLREDIIERDGLTGYRLIAAESDGMPGVTIDRYQNFFVCQLLSAGAEYNKQAIVDALVECFPDCNVYERSDVAVRKKEGLKETTGVLHGEEPPKSVVIEENGVKISVDIVGGHKTGFYLDQRDSRQQAMKYVKDKEVLNCFSYTGGFGLYALKGGAKRVINADVSQPALDTAKFNAELNEFDISKKRAVFLNADVFKLLREYRDQGTKFDVVIMDPPKFAESKAQLNGACRGYKDINMLAMQILNPGGTLLTYSCSGLMDQVLFQKIIADAAVDANRQVKFVERFEQAADHPTDTAYPEGFYLKGFACKVL.

The PUA domain maps to 2 to 79 (TAAIYLVKGR…KEEINKAFFV (78 aa)).

The protein belongs to the methyltransferase superfamily. RlmI family.

The protein localises to the cytoplasm. The enzyme catalyses cytidine(1962) in 23S rRNA + S-adenosyl-L-methionine = 5-methylcytidine(1962) in 23S rRNA + S-adenosyl-L-homocysteine + H(+). In terms of biological role, specifically methylates the cytosine at position 1962 (m5C1962) of 23S rRNA. This chain is Ribosomal RNA large subunit methyltransferase I, found in Vibrio campbellii (strain ATCC BAA-1116).